Reading from the N-terminus, the 439-residue chain is 26S proteasome regulatory subunit 4 (439 aa).

Disordered regions lie at residues Met1 to Leu48 and Glu82 to Thr104. 2 stretches are compositionally biased toward basic and acidic residues: residues Gly12–Glu25 and Glu82–Arg102. Residue Gly225–Thr232 participates in ATP binding.

It belongs to the AAA ATPase family. As to quaternary structure, interacts with PSMD5.

It localises to the cytoplasm. The protein localises to the nucleus. Its function is as follows. The 26S proteasome is involved in the ATP-dependent degradation of ubiquitinated proteins. The regulatory (or ATPase) complex confers ATP dependency and substrate specificity to the 26S complex. The protein is 26S proteasome regulatory subunit 4 (Rpt2) of Drosophila melanogaster (Fruit fly).